Consider the following 512-residue polypeptide: ATP synthase subunit alpha 2 (512 aa).

ATP is bound at residue 169 to 176; sequence GDRQTGKT.

This sequence belongs to the ATPase alpha/beta chains family. As to quaternary structure, F-type ATPases have 2 components, CF(1) - the catalytic core - and CF(0) - the membrane proton channel. CF(1) has five subunits: alpha(3), beta(3), gamma(1), delta(1), epsilon(1). CF(0) has three main subunits: a(1), b(2) and c(9-12). The alpha and beta chains form an alternating ring which encloses part of the gamma chain. CF(1) is attached to CF(0) by a central stalk formed by the gamma and epsilon chains, while a peripheral stalk is formed by the delta and b chains.

It is found in the cell inner membrane. It catalyses the reaction ATP + H2O + 4 H(+)(in) = ADP + phosphate + 5 H(+)(out). Its function is as follows. Produces ATP from ADP in the presence of a proton gradient across the membrane. The alpha chain is a regulatory subunit. The polypeptide is ATP synthase subunit alpha 2 (Vibrio campbellii (strain ATCC BAA-1116)).